Reading from the N-terminus, the 117-residue chain is Large ribosomal subunit protein bL20 (117 aa).

This sequence belongs to the bacterial ribosomal protein bL20 family.

Binds directly to 23S ribosomal RNA and is necessary for the in vitro assembly process of the 50S ribosomal subunit. It is not involved in the protein synthesizing functions of that subunit. The sequence is that of Large ribosomal subunit protein bL20 (rplT) from Synechocystis sp. (strain ATCC 27184 / PCC 6803 / Kazusa).